The primary structure comprises 243 residues: Carboxy-S-adenosyl-L-methionine synthase (243 aa).

Residues Tyr39, Gly64–Ser66, Asn132, and Arg199 each bind S-adenosyl-L-methionine.

Belongs to the class I-like SAM-binding methyltransferase superfamily. Cx-SAM synthase family. Homodimer.

The enzyme catalyses prephenate + S-adenosyl-L-methionine = carboxy-S-adenosyl-L-methionine + 3-phenylpyruvate + H2O. Its function is as follows. Catalyzes the conversion of S-adenosyl-L-methionine (SAM) to carboxy-S-adenosyl-L-methionine (Cx-SAM). This chain is Carboxy-S-adenosyl-L-methionine synthase, found in Alteromonas mediterranea (strain DSM 17117 / CIP 110805 / LMG 28347 / Deep ecotype).